A 127-amino-acid chain; its full sequence is NADPH-dependent 7-cyano-7-deazaguanine reductase (127 aa).

The active-site Thioimide intermediate is the cysteine 40. Aspartate 47 serves as the catalytic Proton donor. Residues 62–64 and 81–82 each bind substrate; these read VEL and HE.

Belongs to the GTP cyclohydrolase I family. QueF type 1 subfamily.

The protein localises to the cytoplasm. The enzyme catalyses 7-aminomethyl-7-carbaguanine + 2 NADP(+) = 7-cyano-7-deazaguanine + 2 NADPH + 3 H(+). It participates in tRNA modification; tRNA-queuosine biosynthesis. Catalyzes the NADPH-dependent reduction of 7-cyano-7-deazaguanine (preQ0) to 7-aminomethyl-7-deazaguanine (preQ1). This is NADPH-dependent 7-cyano-7-deazaguanine reductase from Campylobacter jejuni (strain RM1221).